Reading from the N-terminus, the 151-residue chain is Ribosome maturation factor RimP (151 aa).

Belongs to the RimP family.

It is found in the cytoplasm. In terms of biological role, required for maturation of 30S ribosomal subunits. The protein is Ribosome maturation factor RimP of Aliivibrio fischeri (strain ATCC 700601 / ES114) (Vibrio fischeri).